The chain runs to 252 residues: Tumor necrosis factor ligand superfamily member 15 (252 aa).

Over 1–39 (MAEELGLGFGEGVPVEVLPEGCRHRPEARAGLAARSKAC) the chain is Cytoplasmic. Residues 40–60 (LALTCCLLSFPILAGLSTLLM) traverse the membrane as a helical; Signal-anchor for type II membrane protein segment. Topologically, residues 61–252 (AGQLRVPGKD…DKTFFGAFLL (192 aa)) are extracellular. The THD domain occupies 96-252 (PRAHLTIKKQ…DKTFFGAFLL (157 aa)). The N-linked (GlcNAc...) asparagine glycan is linked to Asn-137. Residues Cys-163 and Cys-203 are joined by a disulfide bond. N-linked (GlcNAc...) asparagine glycosylation is present at Asn-230.

The protein belongs to the tumor necrosis factor family. In terms of assembly, homotrimer.

It is found in the membrane. Its function is as follows. Receptor for TNFRSF25 and TNFRSF6B. Mediates activation of NF-kappa-B. Inhibits vascular endothelial growth and angiogenesis (in vitro). Promotes activation of caspases and apoptosis. Promotes splenocyte alloactivation. This Mus musculus (Mouse) protein is Tumor necrosis factor ligand superfamily member 15 (Tnfsf15).